A 430-amino-acid polypeptide reads, in one-letter code: Immunoglobulin heavy constant delta (430 aa).

The Extracellular segment spans residues 1–406 (APTKAPDVFP…FDDVGSLWTT (406 aa)). The Ig-like 1 domain occupies 6-98 (PDVFPIISGC…TASKSKKEIF (93 aa)). Cysteines 28 and 84 form a disulfide. A disordered region spans residues 96–167 (EIFRWPESPK…TPECPSHTQP (72 aa)). The segment covering 106 to 118 (AQASSVPTAQPQA) has biased composition (polar residues). O-linked (GalNAc...) serine glycans are attached at residues serine 109 and serine 110. Threonine 113, threonine 126, threonine 127, threonine 131, and threonine 132 each carry an O-linked (GalNAc...) threonine glycan. The span at 138-158 (GGEEKKKEKEKEEQEERETKT) shows a compositional bias: basic and acidic residues. Ig-like domains lie at 175-263 (PAVQ…RLMA) and 267-373 (PAAQ…RSLE). Disulfide bonds link cysteine 190–cysteine 249 and cysteine 294–cysteine 355. N-linked (GlcNAc...) asparagine glycans are attached at residues asparagine 225, asparagine 316, and asparagine 367. Residues 407–427 (LSTFVALFILTLLYSGIVTFI) form a helical membrane-spanning segment. The Cytoplasmic portion of the chain corresponds to 428 to 430 (KVK).

In terms of assembly, immunoglobulins are composed of two identical heavy chains and two identical light chains; disulfide-linked. An IgD molecule contains thus a delta heavy chain combined with either a kappa or a lambda light chains. Kappa light chains are found predominantly on the membrane IgD (mIgD) form and lambda on the secreted IgD (sIgD) form, this fact is poorly understood. Membrane-bound IgD molecules are non-covalently associated with a heterodimer of CD79A and CD79B.

It is found in the secreted. It localises to the cell membrane. Functionally, constant region of immunoglobulin heavy chains. Immunoglobulins, also known as antibodies, are membrane-bound or secreted glycoproteins produced by B lymphocytes. In the recognition phase of humoral immunity, the membrane-bound immunoglobulins serve as receptors which, upon binding of a specific antigen, trigger the clonal expansion and differentiation of B lymphocytes into immunoglobulins-secreting plasma cells. Secreted immunoglobulins mediate the effector phase of humoral immunity, which results in the elimination of bound antigens. The antigen binding site is formed by the variable domain of one heavy chain, together with that of its associated light chain. Thus, each immunoglobulin has two antigen binding sites with remarkable affinity for a particular antigen. The variable domains are assembled by a process called V-(D)-J rearrangement and can then be subjected to somatic hypermutations which, after exposure to antigen and selection, allow affinity maturation for a particular antigen. IgD is the major antigen receptor isotype on the surface of most peripheral B-cells, where it is coexpressed with IgM. The membrane-bound IgD (mIgD) induces the phosphorylation of CD79A and CD79B by the Src family of protein tyrosine kinases. Soluble IgD (sIgD) concentration in serum below those of IgG, IgA, and IgM but much higher than that of IgE. IgM and IgD molecules present on B cells have identical V regions and antigen-binding sites. After the antigen binds to the B-cell receptor, the secreted form sIgD is shut off. IgD is a potent inducer of TNF, IL1B, and IL1RN. IgD also induces release of IL6, IL10, and LIF from peripheral blood mononuclear cells. Monocytes seem to be the main producers of cytokines in vitro in the presence of IgD. This Homo sapiens (Human) protein is Immunoglobulin heavy constant delta.